A 215-amino-acid polypeptide reads, in one-letter code: Pre-hexon-linking protein VIII (215 aa).

Threonine 62 bears the Phosphothreonine; by host mark. Residues 110-150 (AWINYKNGSVRYEAPLQLAEEQVGGPLNAFAIKHQLQLAGG) constitute a propeptide that is removed on maturation.

It belongs to the adenoviridae hexon-linking protein family. Interacts with the peripentonal hexons as well as the hexons in the facets. Part of a complex composed of the core-capsid bridging protein, the endosome lysis protein VI and the hexon-linking protein VIII; these interactions bridge the virus core to the capsid. In terms of processing, cleaved by the viral protease during virion maturation. May cause the middle segment to be shed from the capsid.

It is found in the virion. Its subcellular location is the host nucleus. Functionally, structural component of the virion that acts as a cement protein on the capsid interior and which glue the peripentonal hexons and group-of-nine hexons together. The sequence is that of Pre-hexon-linking protein VIII from Murine adenovirus A serotype 1 (MAdV-1).